The following is a 447-amino-acid chain: GTPase Der (447 aa).

2 EngA-type G domains span residues proline 3–arginine 167 and valine 181–methionine 354. Residues glycine 9–serine 16, aspartate 56–phenylalanine 60, asparagine 119–glutamate 122, glycine 187–serine 194, aspartate 234–leucine 238, and asparagine 299–aspartate 302 contribute to the GTP site. Residues isoleucine 355 to lysine 439 form the KH-like domain.

The protein belongs to the TRAFAC class TrmE-Era-EngA-EngB-Septin-like GTPase superfamily. EngA (Der) GTPase family. Associates with the 50S ribosomal subunit.

Functionally, GTPase that plays an essential role in the late steps of ribosome biogenesis. The polypeptide is GTPase Der (Cupriavidus metallidurans (strain ATCC 43123 / DSM 2839 / NBRC 102507 / CH34) (Ralstonia metallidurans)).